The chain runs to 215 residues: YPESIDWRDKGAVTPVKNQNPCGSCWAFSTVATVEGINKIRTGKLISLSEQELLDCDRRSHGCKGGYQTGSIQYVADNGGVHTEKEYPYEKKQGKCRAKEKKGTKVQITGYKRVPANDEISLIQGIGNQPVSVLHESKGRAFQLYKGGIFNGPCGYKNDHAVTAIGYGKAQLLDKNSWGPNWGEKGYIKIKRASGKSEGTCGVYKSSYFPIKGYR.

3 disulfide bridges follow: cysteine 22–cysteine 63, cysteine 56–cysteine 96, and cysteine 154–cysteine 201. Cysteine 25 is a catalytic residue. Active-site residues include histidine 160 and asparagine 176.

Belongs to the peptidase C1 family.

Its function is as follows. Cysteine protease. This is Chymomexicain from Jacaratia mexicana (Wild papaya).